Here is a 194-residue protein sequence, read N- to C-terminus: Mitochondrial import inner membrane translocase subunit Tim22 (194 aa).

Disulfide bonds link cysteine 69-cysteine 141 and cysteine 160-cysteine 179. Transmembrane regions (helical) follow at residues 74–94 (VLAC…TAGI), 123–143 (MSYA…ECLV), and 170–190 (AGVK…AAID).

It belongs to the Tim17/Tim22/Tim23 family. Component of the TIM22 complex, whose core is composed of TIMM22, associated with peripheral protein FXC1/TIMM10B and the 70 kDa heterohexamer. In most cases, the 70 kDa complex is composed of TIMM9 and TIMM10 (TIMM10A or TIMM10B). A small fraction of the 70 kDa complex is composed of TIMM8 (TIMM8A/DDP1 or TIMM8B/DDP2) and TIMM13. The TIM22 complex also contains AGK and TIMM29. Interacts directly with TIMM9, TIMM10A and FXC1/TIMM10B. Interacts (when oxidized) with TIMM29; interaction is direct. Disulfide bonds promote efficient assembly of the TIM22 complex.

It localises to the mitochondrion inner membrane. Its function is as follows. Essential core component of the TIM22 complex, a complex that mediates the import and insertion of multi-pass transmembrane proteins into the mitochondrial inner membrane. In the TIM22 complex, it constitutes the voltage-activated and signal-gated channel. Forms a twin-pore translocase that uses the membrane potential as external driving force in 2 voltage-dependent steps. The protein is Mitochondrial import inner membrane translocase subunit Tim22 (Timm22) of Mus musculus (Mouse).